The following is a 100-amino-acid chain: Large ribosomal subunit protein bL21 (100 aa).

The protein belongs to the bacterial ribosomal protein bL21 family. Part of the 50S ribosomal subunit. Contacts proteins L15 and L20.

In terms of biological role, binds directly to 23S rRNA, probably serving to organize its structure. This Deinococcus radiodurans (strain ATCC 13939 / DSM 20539 / JCM 16871 / CCUG 27074 / LMG 4051 / NBRC 15346 / NCIMB 9279 / VKM B-1422 / R1) protein is Large ribosomal subunit protein bL21.